A 538-amino-acid chain; its full sequence is Carboxypeptidase 2 (538 aa).

An N-terminal signal peptide occupies residues 1–21; the sequence is MVAYRFLTLISLGLGSHCASA. The N-linked (GlcNAc...) asparagine glycan is linked to Asn-46. The segment at 53–76 is disordered; sequence PAFTSPGTVPRGFSDGTSGPTRDE. The Peptidase M14 domain maps to 71–351; sequence GPTRDETMEG…VMVKSILQTA (281 aa). Zn(2+) is bound by residues His-136, Glu-139, and His-224. Catalysis depends on Glu-322, which acts as the Proton donor/acceptor. 2 N-linked (GlcNAc...) asparagine glycosylation sites follow: Asn-393 and Asn-459.

It belongs to the peptidase M14 family. Requires Zn(2+) as cofactor.

Its subcellular location is the secreted. In terms of biological role, extracellular metalloprotease that contributes to pathogenicity. The polypeptide is Carboxypeptidase 2 (MCPB) (Trichophyton equinum (Horse ringworm fungus)).